Reading from the N-terminus, the 74-residue chain is uncharacterized protein (74 aa).

The signal sequence occupies residues 1 to 19 (MIGLIVVPILFAIKGIVVG). The disordered stretch occupies residues 26–74 (KFGKHSNTKDQKEDKDEDKRQSISQRKQHTEWPIEENRIQRRAPNQSAL). Basic and acidic residues-rich tracts occupy residues 32 to 46 (NTKD…DKRQ) and 53 to 64 (QHTEWPIEENRI).

This is an uncharacterized protein from Saccharomyces cerevisiae (strain ATCC 204508 / S288c) (Baker's yeast).